A 251-amino-acid chain; its full sequence is DNA repair protein RecO (251 aa).

It belongs to the RecO family.

Involved in DNA repair and RecF pathway recombination. The sequence is that of DNA repair protein RecO from Lactococcus lactis subsp. cremoris (strain SK11).